The primary structure comprises 496 residues: Probable serine/threonine-protein kinase DDB_G0284251 (496 aa).

The span at 1-13 shows a compositional bias: low complexity; the sequence is MIEINNNHNNGNG. The interval 1–25 is disordered; sequence MIEINNNHNNGNGKQFPSSQIMPDS. The region spanning 36–288 is the Protein kinase domain; the sequence is YTLGEKIGRG…AQELLQHPIF (253 aa). ATP contacts are provided by residues 42 to 50 and Lys-65; that span reads IGRGAFGQV. Asp-158 acts as the Proton acceptor in catalysis. Residues 323–345 are disordered; sequence DWGSSSSTSGSSTPLSSSSSSSN. Residues 353-386 adopt a coiled-coil conformation; it reads EDFNKLQTTIKQQAQTISNLSEEILILKKELKEK. The segment at 454–496 is disordered; the sequence is PQLTPSSSRENISLSNSSSSIPNPNQNQNQNNKSKSKKFGFFS. Residues 458–486 are compositionally biased toward low complexity; the sequence is PSSSRENISLSNSSSSIPNPNQNQNQNNK. The span at 487-496 shows a compositional bias: basic residues; that stretch reads SKSKKFGFFS.

It belongs to the protein kinase superfamily. STE Ser/Thr protein kinase family. Mg(2+) is required as a cofactor.

The enzyme catalyses L-seryl-[protein] + ATP = O-phospho-L-seryl-[protein] + ADP + H(+). It catalyses the reaction L-threonyl-[protein] + ATP = O-phospho-L-threonyl-[protein] + ADP + H(+). This chain is Probable serine/threonine-protein kinase DDB_G0284251, found in Dictyostelium discoideum (Social amoeba).